The following is a 537-amino-acid chain: 2-succinyl-5-enolpyruvyl-6-hydroxy-3-cyclohexene-1-carboxylate synthase (537 aa).

The protein belongs to the TPP enzyme family. MenD subfamily. In terms of assembly, homodimer. It depends on Mg(2+) as a cofactor. Requires Mn(2+) as cofactor. Thiamine diphosphate is required as a cofactor.

The catalysed reaction is isochorismate + 2-oxoglutarate + H(+) = 5-enolpyruvoyl-6-hydroxy-2-succinyl-cyclohex-3-ene-1-carboxylate + CO2. The protein operates within quinol/quinone metabolism; 1,4-dihydroxy-2-naphthoate biosynthesis; 1,4-dihydroxy-2-naphthoate from chorismate: step 2/7. It functions in the pathway quinol/quinone metabolism; menaquinone biosynthesis. Catalyzes the thiamine diphosphate-dependent decarboxylation of 2-oxoglutarate and the subsequent addition of the resulting succinic semialdehyde-thiamine pyrophosphate anion to isochorismate to yield 2-succinyl-5-enolpyruvyl-6-hydroxy-3-cyclohexene-1-carboxylate (SEPHCHC). The polypeptide is 2-succinyl-5-enolpyruvyl-6-hydroxy-3-cyclohexene-1-carboxylate synthase (Desulfotalea psychrophila (strain LSv54 / DSM 12343)).